Reading from the N-terminus, the 572-residue chain is Proline--tRNA ligase (572 aa).

It belongs to the class-II aminoacyl-tRNA synthetase family. ProS type 1 subfamily. Homodimer.

It localises to the cytoplasm. The catalysed reaction is tRNA(Pro) + L-proline + ATP = L-prolyl-tRNA(Pro) + AMP + diphosphate. Functionally, catalyzes the attachment of proline to tRNA(Pro) in a two-step reaction: proline is first activated by ATP to form Pro-AMP and then transferred to the acceptor end of tRNA(Pro). As ProRS can inadvertently accommodate and process non-cognate amino acids such as alanine and cysteine, to avoid such errors it has two additional distinct editing activities against alanine. One activity is designated as 'pretransfer' editing and involves the tRNA(Pro)-independent hydrolysis of activated Ala-AMP. The other activity is designated 'posttransfer' editing and involves deacylation of mischarged Ala-tRNA(Pro). The misacylated Cys-tRNA(Pro) is not edited by ProRS. This Salmonella newport (strain SL254) protein is Proline--tRNA ligase.